The sequence spans 188 residues: Elongation factor P (188 aa).

The protein belongs to the elongation factor P family.

The protein resides in the cytoplasm. It participates in protein biosynthesis; polypeptide chain elongation. Involved in peptide bond synthesis. Stimulates efficient translation and peptide-bond synthesis on native or reconstituted 70S ribosomes in vitro. Probably functions indirectly by altering the affinity of the ribosome for aminoacyl-tRNA, thus increasing their reactivity as acceptors for peptidyl transferase. In Cellvibrio japonicus (strain Ueda107) (Pseudomonas fluorescens subsp. cellulosa), this protein is Elongation factor P.